A 146-amino-acid polypeptide reads, in one-letter code: Ribonuclease H (146 aa).

The region spanning Met-1–Lys-143 is the RNase H type-1 domain. Mg(2+) is bound by residues Asp-10, Glu-48, Asp-70, and Asp-135.

The protein belongs to the RNase H family. In terms of assembly, monomer. Requires Mg(2+) as cofactor.

It is found in the cytoplasm. The catalysed reaction is Endonucleolytic cleavage to 5'-phosphomonoester.. Its function is as follows. Endonuclease that specifically degrades the RNA of RNA-DNA hybrids. This Chlorobium limicola (strain DSM 245 / NBRC 103803 / 6330) protein is Ribonuclease H.